Reading from the N-terminus, the 534-residue chain is Major facilitator-type transporter sor6 (534 aa).

2 N-linked (GlcNAc...) asparagine glycosylation sites follow: N29 and N36. 12 consecutive transmembrane segments (helical) span residues 66–86 (WFLT…SSAY), 103–123 (LFIT…AVWG), 160–180 (AMVA…LIVL), 182–202 (FLAG…IADL), 209–229 (GLAM…GPIV), 241–261 (WVQG…VIFV), 318–338 (IVLI…MFLG), 354–374 (FGGL…GYAI), 395–415 (LPPA…FAWT), 424–444 (VSIV…LPIV), 456–476 (ASVL…FPLF), and 486–506 (IHWA…FPFF).

Belongs to the major facilitator superfamily. Sugar transporter (TC 2.A.1.1) family.

It localises to the membrane. Its function is as follows. Major facilitator-type transporter; part of the gene cluster that mediates the biosynthesis of sorbicillinoids, a diverse group of yellow secondary metabolites that restrict growth of competing pathogenic fungi but not of bacteria. In Hypocrea jecorina (strain QM6a) (Trichoderma reesei), this protein is Major facilitator-type transporter sor6.